The sequence spans 361 residues: MFSGFSSFGGGNGFVNMPQTFEEFFRCYPIAMMNDRIRKDDANFGGKIFLPPSALSKLSMLNIRYPMLFKLTANETGRVTHGGVLEFIAEEGRVYLPQWMMETLGIQPGSLLQISSTDVPLGQFVKLEPQSVDFLDISDPKAVLENVLRNFSTLTVDDVIEISYNGKTFKIKILEVKPESSSKSICVIETDLVTDFAPPVGYVEPDYKALKAQQDKEKKNSFGKGQVLDPSVLGQGSMSTRIDYAGIANSSRNKLSKFVGQGQNISGKAPKAEPKQDIKDMKITFDGEPAKLDLPEGQLFFGFPMVLPKEDEESAAGSKSSEQNFQGQGISLRKSNKRKTKSDHDSSKSKAPKSPEVIEID.

3 monoubiquitin-binding regions span residues 27–28, 30–32, and 99–101; these read CY, IAM, and WMM. The tract at residues 310 to 361 is disordered; the sequence is EDEESAAGSKSSEQNFQGQGISLRKSNKRKTKSDHDSSKSKAPKSPEVIEID. Positions 317–329 are enriched in polar residues; it reads GSKSSEQNFQGQG. Serine 354 is modified (phosphoserine).

Belongs to the UFD1 family. As to quaternary structure, component of the heterotrimeric CDC48-NPL4-UFD1 ATPase complex. The CDC48-NPL4-UFD1 ATPase complex interacts with the HRD1 ubiquitin ligase complex composed of the E3 ligase HRD1, its cofactors HRD3, USA1 and DER1, substrate recruiting factor YOS9 and CDC48-binding protein UBX2. Interaction between the complexes is mediated by interaction between CDC48-NPL4-UFD1 complex member CDC48 and HRD1 complex member UBX2. Forms a complex composed of CDC48, NPL4, UFD1, DOA1, SHP1 and deubiquitinase OTU1. Interacts with NPL4, CDC48 and UBX2.

Functions at a post-ubiquitation step in the ubiquitin fusion degradation (UFD) pathway. Has a role in the endoplasmic reticulum-associated degradation (ERAD) pathway. Required for the proteasome-dependent processing/activation of MGA2 and SPT23 transcription factors leading to the subsequent expression of OLE1. Has an additional role in the turnover of OLE1 where it targets ubiquitinated OLE1 and other proteins to the ERAD. This Saccharomyces cerevisiae (strain ATCC 204508 / S288c) (Baker's yeast) protein is Ubiquitin fusion degradation protein 1 (UFD1).